The sequence spans 194 residues: Imidazoleglycerol-phosphate dehydratase (194 aa).

It belongs to the imidazoleglycerol-phosphate dehydratase family.

The protein resides in the cytoplasm. It catalyses the reaction D-erythro-1-(imidazol-4-yl)glycerol 3-phosphate = 3-(imidazol-4-yl)-2-oxopropyl phosphate + H2O. It participates in amino-acid biosynthesis; L-histidine biosynthesis; L-histidine from 5-phospho-alpha-D-ribose 1-diphosphate: step 6/9. The chain is Imidazoleglycerol-phosphate dehydratase from Chlorobaculum parvum (strain DSM 263 / NCIMB 8327) (Chlorobium vibrioforme subsp. thiosulfatophilum).